Here is a 445-residue protein sequence, read N- to C-terminus: Adenylosuccinate synthetase (445 aa).

GTP-binding positions include 12 to 18 (GDEGKGK) and 40 to 42 (GHT). D13 acts as the Proton acceptor in catalysis. The Mg(2+) site is built by D13 and G40. IMP-binding positions include 13–16 (DEGK), 38–41 (NAGH), T128, R142, Q223, T238, and R302. H41 functions as the Proton donor in the catalytic mechanism. 298 to 304 (TTTGRKR) contributes to the substrate binding site. GTP contacts are provided by residues R304, 330–332 (KLD), and 411–413 (SLG).

It belongs to the adenylosuccinate synthetase family. As to quaternary structure, homodimer. Mg(2+) is required as a cofactor.

The protein resides in the cytoplasm. It carries out the reaction IMP + L-aspartate + GTP = N(6)-(1,2-dicarboxyethyl)-AMP + GDP + phosphate + 2 H(+). It participates in purine metabolism; AMP biosynthesis via de novo pathway; AMP from IMP: step 1/2. In terms of biological role, plays an important role in the de novo pathway of purine nucleotide biosynthesis. Catalyzes the first committed step in the biosynthesis of AMP from IMP. The polypeptide is Adenylosuccinate synthetase (Cyanothece sp. (strain PCC 7425 / ATCC 29141)).